The sequence spans 44 residues: Protein PsbN (44 aa).

A helical membrane pass occupies residues 7-29 (VATVFVSCLVLSITGYSLYIGFG).

It belongs to the PsbN family.

It localises to the plastid. The protein resides in the chloroplast thylakoid membrane. May play a role in photosystem I and II biogenesis. This chain is Protein PsbN, found in Nephroselmis olivacea (Green alga).